Consider the following 230-residue polypeptide: Orotidine 5'-phosphate decarboxylase (230 aa).

Substrate-binding positions include Asp-11, Lys-34, 61–70 (DLKLHDIPNT), Thr-117, Arg-179, Gln-188, Gly-208, and Arg-209. Residue Lys-63 is the Proton donor of the active site.

The protein belongs to the OMP decarboxylase family. Type 1 subfamily. In terms of assembly, homodimer.

The catalysed reaction is orotidine 5'-phosphate + H(+) = UMP + CO2. The protein operates within pyrimidine metabolism; UMP biosynthesis via de novo pathway; UMP from orotate: step 2/2. Catalyzes the decarboxylation of orotidine 5'-monophosphate (OMP) to uridine 5'-monophosphate (UMP). The chain is Orotidine 5'-phosphate decarboxylase from Streptococcus sanguinis (strain SK36).